A 484-amino-acid chain; its full sequence is Chromosomal replication initiator protein DnaA (484 aa).

A domain I, interacts with DnaA modulators region spans residues 1–74; sequence MEKSKNIWSL…ILTKNGYNNV (74 aa). The tract at residues 74 to 139 is domain II; it reads VTIVFTNQPP…EEEPTNFKNP (66 aa). A domain III, AAA+ region region spans residues 140-356; it reads FLKKRYTFEN…AAVTKLKAYI (217 aa). G184, G186, K187, and T188 together coordinate ATP. The domain IV, binds dsDNA stretch occupies residues 357–484; it reads DLDNIEIDID…TELMNKIKKN (128 aa).

It belongs to the DnaA family. In terms of assembly, oligomerizes as a right-handed, spiral filament on DNA at oriC.

Its subcellular location is the cytoplasm. Its function is as follows. Plays an essential role in the initiation and regulation of chromosomal replication. ATP-DnaA binds to the origin of replication (oriC) to initiate formation of the DNA replication initiation complex once per cell cycle. Binds the DnaA box (a 9 base pair repeat at the origin) and separates the double-stranded (ds)DNA. Forms a right-handed helical filament on oriC DNA; dsDNA binds to the exterior of the filament while single-stranded (ss)DNA is stabiized in the filament's interior. The ATP-DnaA-oriC complex binds and stabilizes one strand of the AT-rich DNA unwinding element (DUE), permitting loading of DNA polymerase. After initiation quickly degrades to an ADP-DnaA complex that is not apt for DNA replication. Binds acidic phospholipids. In Borrelia garinii subsp. bavariensis (strain ATCC BAA-2496 / DSM 23469 / PBi) (Borreliella bavariensis), this protein is Chromosomal replication initiator protein DnaA.